The sequence spans 466 residues: UDP-N-acetylmuramoylalanine--D-glutamate ligase (466 aa).

139–145 (GTAGKGG) lines the ATP pocket.

Belongs to the MurCDEF family.

The protein resides in the cytoplasm. It carries out the reaction UDP-N-acetyl-alpha-D-muramoyl-L-alanine + D-glutamate + ATP = UDP-N-acetyl-alpha-D-muramoyl-L-alanyl-D-glutamate + ADP + phosphate + H(+). It participates in cell wall biogenesis; peptidoglycan biosynthesis. Functionally, cell wall formation. Catalyzes the addition of glutamate to the nucleotide precursor UDP-N-acetylmuramoyl-L-alanine (UMA). In Deinococcus geothermalis (strain DSM 11300 / CIP 105573 / AG-3a), this protein is UDP-N-acetylmuramoylalanine--D-glutamate ligase.